A 312-amino-acid chain; its full sequence is uncharacterized protein (312 aa).

The protein belongs to the mimivirus R69 family.

This is an uncharacterized protein from Acanthamoeba polyphaga mimivirus (APMV).